The primary structure comprises 216 residues: Small ribosomal subunit protein uS3c (216 aa).

Residues 43 to 118 enclose the KH type-2 domain; sequence IKNYIQKNRR…KLNIAIVKVT (76 aa).

The protein belongs to the universal ribosomal protein uS3 family. Part of the 30S ribosomal subunit.

It is found in the plastid. The protein resides in the chloroplast. The chain is Small ribosomal subunit protein uS3c (rps3) from Phaseolus angularis (Azuki bean).